Here is a 193-residue protein sequence, read N- to C-terminus: Ribonuclease HII (193 aa).

Residues 1 to 193 (MTLGIDEAGR…SFALKNNWFS (193 aa)) form the RNase H type-2 domain. Asp6, Glu7, and Asp103 together coordinate a divalent metal cation.

Belongs to the RNase HII family. Mn(2+) is required as a cofactor. Requires Mg(2+) as cofactor.

The protein resides in the cytoplasm. It carries out the reaction Endonucleolytic cleavage to 5'-phosphomonoester.. Endonuclease that specifically degrades the RNA of RNA-DNA hybrids. This Helicobacter acinonychis (strain Sheeba) protein is Ribonuclease HII.